A 385-amino-acid chain; its full sequence is Interleukin-13 receptor subunit alpha-2 (385 aa).

The first 23 residues, 1–23 (MALMAVNTRCLCLFLLCTITGHS), serve as a signal peptide directing secretion. Topologically, residues 24-336 (LEIKVNPPQD…WEGYTGPDSK (313 aa)) are extracellular. Fibronectin type-III domains lie at 30–130 (PPQD…ADEG), 133–221 (GTKI…PIRS), and 236–334 (PPEF…TGPD). Cysteine 61 and cysteine 109 are joined by a disulfide. Asparagine 111 carries an N-linked (GlcNAc...) asparagine glycan. Cysteine 141 and cysteine 151 are disulfide-bonded. Residue asparagine 164 is glycosylated (N-linked (GlcNAc...) asparagine). Cysteine 180 and cysteine 193 are disulfide-bonded. Residues asparagine 211 and asparagine 295 are each glycosylated (N-linked (GlcNAc...) asparagine). A disulfide bridge connects residues cysteine 265 and cysteine 312. A WSXWS motif motif is present at residues 318-322 (WSEWS). A helical membrane pass occupies residues 337-357 (IVFIVPVCLFFIFLLLLLCLI). Residues 358 to 385 (VEKEDPEPTLSLHVDLNKEMYAYEETLC) lie on the Cytoplasmic side of the membrane.

Belongs to the type I cytokine receptor family. Type 5 subfamily. In terms of assembly, interacts with IL4RA. Interacts with high affinity to interleukin-13 (IL13), but not to interleukin-4 (IL4). Post-translationally, cleaved by MMP8 leading to a soluble form that is also able to interact with IL13.

It is found in the cell membrane. Cell surface receptor that plays a role in the regulation of IL-13-mediated responses. Functions as a decoy receptor that inhibits IL-13- and IL-4-mediated signal transduction via the JAK-STAT pathway and thereby modulates immune responses and inflammation. Serves as a functional signaling receptor for IL-13 in an alternative pathway involving AP-1 ultimately leading to the production of TGFB1. This chain is Interleukin-13 receptor subunit alpha-2 (Il13ra2), found in Rattus norvegicus (Rat).